We begin with the raw amino-acid sequence, 287 residues long: Protease HtpX (287 aa).

The next 2 helical transmembrane spans lie at Ile4–Ile24 and Gly33–Ile53. His139 contacts Zn(2+). Glu140 is an active-site residue. A Zn(2+)-binding site is contributed by His143. A run of 2 helical transmembrane segments spans residues Leu154 to Ile174 and Ala195 to Phe215. Glu220 contributes to the Zn(2+) binding site.

Belongs to the peptidase M48B family. Zn(2+) serves as cofactor.

The protein localises to the cell inner membrane. The protein is Protease HtpX of Shewanella putrefaciens (strain CN-32 / ATCC BAA-453).